Consider the following 318-residue polypeptide: Aspartate carbamoyltransferase catalytic subunit (318 aa).

Residues R67 and T68 each contribute to the carbamoyl phosphate site. K95 is an L-aspartate binding site. Carbamoyl phosphate contacts are provided by R117, H145, and Q148. R178 and R236 together coordinate L-aspartate. Carbamoyl phosphate is bound by residues G277 and P278.

It belongs to the aspartate/ornithine carbamoyltransferase superfamily. ATCase family. In terms of assembly, heterododecamer (2C3:3R2) of six catalytic PyrB chains organized as two trimers (C3), and six regulatory PyrI chains organized as three dimers (R2).

It carries out the reaction carbamoyl phosphate + L-aspartate = N-carbamoyl-L-aspartate + phosphate + H(+). It functions in the pathway pyrimidine metabolism; UMP biosynthesis via de novo pathway; (S)-dihydroorotate from bicarbonate: step 2/3. In terms of biological role, catalyzes the condensation of carbamoyl phosphate and aspartate to form carbamoyl aspartate and inorganic phosphate, the committed step in the de novo pyrimidine nucleotide biosynthesis pathway. The protein is Aspartate carbamoyltransferase catalytic subunit of Roseiflexus castenholzii (strain DSM 13941 / HLO8).